We begin with the raw amino-acid sequence, 322 residues long: Cytochrome c biogenesis protein CcsA (322 aa).

7 consecutive transmembrane segments (helical) span residues 9–29 (ILTH…LITL), 44–64 (GMIV…VSSG), 68–88 (LSNL…LHTI), 143–163 (MLLS…ILII), 226–246 (IISL…VWAN), 260–274 (TWAF…IYLH), and 289–309 (IASI…LLGI).

The protein belongs to the CcmF/CycK/Ccl1/NrfE/CcsA family. May interact with Ccs1.

It localises to the plastid. It is found in the chloroplast thylakoid membrane. Its function is as follows. Required during biogenesis of c-type cytochromes (cytochrome c6 and cytochrome f) at the step of heme attachment. This Hordeum vulgare (Barley) protein is Cytochrome c biogenesis protein CcsA.